The sequence spans 1037 residues: uncharacterized protein (1037 aa).

This is an uncharacterized protein from Saccharomyces cerevisiae (strain ATCC 204508 / S288c) (Baker's yeast).